We begin with the raw amino-acid sequence, 320 residues long: 1-aminocyclopropane-1-carboxylate oxidase 2 (320 aa).

A coiled-coil region spans residues 111–143 (DEYRTAMKDFGKRLENLAEDLLDLLCENLGLEK). The region spanning 156-256 (PTFGTKVSNY…RMSVASFYNP (101 aa)) is the Fe2OG dioxygenase domain. Fe cation-binding residues include H180, D182, and H237. R247 is a binding site for 2-oxoglutarate.

This sequence belongs to the iron/ascorbate-dependent oxidoreductase family. It depends on Fe(2+) as a cofactor. Requires Cu(2+) as cofactor. In terms of tissue distribution, expressed in vegetative tissues. Constitutively expressed in leaves and blades. In ethylene exposed etiolated seedlings, localized in cells at the outer side of the exaggerated hook in an ethylene-dependent manner and following an ethylene sensitive pattern. Also detected in the root tip when treated by ethylene.

The catalysed reaction is 1-aminocyclopropane-1-carboxylate + L-ascorbate + O2 = ethene + L-dehydroascorbate + hydrogen cyanide + CO2 + 2 H2O. It participates in alkene biosynthesis; ethylene biosynthesis via S-adenosyl-L-methionine; ethylene from S-adenosyl-L-methionine: step 2/2. Its function is as follows. Enzyme involved in the ethylene biosynthesis. Required to mediate the 1-aminocyclopropane-1-carboxylic acid (ACC)-mediated reversion of the ABA-induced inhibition of seed germination via endosperm rupture. May promote stem elongation by maximizing the extensibility cells, possibly by activating ethylene biosynthesis, in response to very-long-chain fatty acids (VLCFAs C20:0 to C30:0). The protein is 1-aminocyclopropane-1-carboxylate oxidase 2 (ACO2) of Arabidopsis thaliana (Mouse-ear cress).